The primary structure comprises 165 residues: Regulator of sigma D (165 aa).

It belongs to the Rsd/AlgQ family. Interacts with RpoD.

It is found in the cytoplasm. In terms of biological role, binds RpoD and negatively regulates RpoD-mediated transcription activation by preventing the interaction between the primary sigma factor RpoD with the catalytic core of the RNA polymerase and with promoter DNA. May be involved in replacement of the RNA polymerase sigma subunit from RpoD to RpoS during the transition from exponential growth to the stationary phase. The protein is Regulator of sigma D of Enterobacter sp. (strain 638).